The primary structure comprises 564 residues: Formate--tetrahydrofolate ligase (564 aa).

65–72 (TPLGEGKT) is an ATP binding site.

This sequence belongs to the formate--tetrahydrofolate ligase family.

The enzyme catalyses (6S)-5,6,7,8-tetrahydrofolate + formate + ATP = (6R)-10-formyltetrahydrofolate + ADP + phosphate. It functions in the pathway one-carbon metabolism; tetrahydrofolate interconversion. This is Formate--tetrahydrofolate ligase from Roseiflexus castenholzii (strain DSM 13941 / HLO8).